We begin with the raw amino-acid sequence, 146 residues long: Globin (146 aa).

Alanine 1 carries the N-acetylalanine modification. In terms of domain architecture, Globin spans 1–146; that stretch reads ALTEPQKTAL…LLTMLIKAHS (146 aa). Positions 65 and 97 each coordinate heme b.

Belongs to the globin family. As to quaternary structure, homodimer.

This chain is Globin, found in Buccinum undatum (Common whelk).